Reading from the N-terminus, the 396-residue chain is Elongation factor Tu (396 aa).

Residues 11 to 205 enclose the tr-type G domain; it reads KPHVNIGTIG…TIDEYIPTPV (195 aa). The segment at 20 to 27 is G1; the sequence is GHVDHGKT. Position 20-27 (20-27) interacts with GTP; sequence GHVDHGKT. Thr27 lines the Mg(2+) pocket. The G2 stretch occupies residues 61 to 65; sequence GITIN. The G3 stretch occupies residues 82–85; that stretch reads DAPG. GTP contacts are provided by residues 82 to 86 and 137 to 140; these read DAPGH and NKTD. The tract at residues 137-140 is G4; the sequence is NKTD. Positions 175–177 are G5; the sequence is SAL.

This sequence belongs to the TRAFAC class translation factor GTPase superfamily. Classic translation factor GTPase family. EF-Tu/EF-1A subfamily. As to quaternary structure, monomer.

The protein resides in the cytoplasm. The enzyme catalyses GTP + H2O = GDP + phosphate + H(+). In terms of biological role, GTP hydrolase that promotes the GTP-dependent binding of aminoacyl-tRNA to the A-site of ribosomes during protein biosynthesis. In Lacticaseibacillus casei (strain BL23) (Lactobacillus casei), this protein is Elongation factor Tu.